Reading from the N-terminus, the 402-residue chain is Choline dehydrogenase (402 aa).

Belongs to the iron-containing alcohol dehydrogenase family.

It carries out the reaction choline + NAD(+) = betaine aldehyde + NADH + H(+). It participates in amine and polyamine biosynthesis; betaine biosynthesis via choline pathway; betaine aldehyde from choline (dehydrogenase route): step 1/1. In terms of biological role, involved in the biosynthesis of the osmoprotectant glycine betaine from choline. The polypeptide is Choline dehydrogenase (Bacillus subtilis (strain 168)).